A 584-amino-acid chain; its full sequence is Putative poly(A) polymerase catalytic subunit (584 aa).

The span at 522–531 shows a compositional bias: basic and acidic residues; sequence EAEISEKEET. The tract at residues 522–584 is disordered; sequence EAEISEKEET…ENSLDSLTSD (63 aa). Low complexity predominate over residues 546 to 569; that stretch reads SPNSSPNSSPNNSLNNSIDISTNN.

This sequence belongs to the poxviridae poly(A) polymerase catalytic subunit family. Highly divergent.

The protein localises to the virion. It carries out the reaction RNA(n) + ATP = RNA(n)-3'-adenine ribonucleotide + diphosphate. Functionally, polymerase that creates the 3'-poly(A) tail of mRNA's. The chain is Putative poly(A) polymerase catalytic subunit from Acanthamoeba polyphaga (Amoeba).